Here is a 505-residue protein sequence, read N- to C-terminus: Lysine--tRNA ligase, heat inducible (505 aa).

N6-acetyllysine is present on residues Lys-114 and Lys-156. 2 residues coordinate Mg(2+): Glu-415 and Glu-422.

Belongs to the class-II aminoacyl-tRNA synthetase family. Homodimer. Mg(2+) serves as cofactor.

The protein resides in the cytoplasm. The catalysed reaction is tRNA(Lys) + L-lysine + ATP = L-lysyl-tRNA(Lys) + AMP + diphosphate. The chain is Lysine--tRNA ligase, heat inducible (lysU) from Escherichia coli O6:H1 (strain CFT073 / ATCC 700928 / UPEC).